The primary structure comprises 582 residues: Semenogelin-2 (582 aa).

Positions Met-1–Gly-23 are cleaved as a signal peptide. Disordered stretches follow at residues Cys-26–Ile-65, Gly-132–Tyr-159, Asn-272–Glu-295, Thr-318–Leu-358, Glu-379–Arg-417, and Glu-439–Thr-582. Composition is skewed to polar residues over residues Gln-31 to Pro-40 and Arg-137 to Tyr-159. The segment covering Lys-325–Gln-335 has biased composition (polar residues). The segment covering Gly-336–Lys-345 has biased composition (basic and acidic residues). Composition is skewed to polar residues over residues Glu-379–Gln-397, Glu-439–Gln-457, Lys-487–Phe-496, and Ser-506–Lys-524. Basic and acidic residues-rich tracts occupy residues Gly-525–Glu-552 and Thr-559–Thr-582.

The protein belongs to the semenogelin family. Interacts with SERPINA5.

The protein localises to the secreted. Its function is as follows. Participates in the formation of a gel matrix (sperm coagulum) entrapping the accessory gland secretions and ejaculated spermatozoa. The chain is Semenogelin-2 (SEMG2) from Hylobates lar (Lar gibbon).